The primary structure comprises 414 residues: Multifunctional CCA protein (414 aa).

Residues glycine 8 and arginine 11 each contribute to the ATP site. The CTP site is built by glycine 8 and arginine 11. Mg(2+)-binding residues include glutamate 21 and aspartate 23. ATP contacts are provided by arginine 91, arginine 137, and arginine 140. Arginine 91, arginine 137, and arginine 140 together coordinate CTP. Positions 228–329 (TGIHTMMTVA…LKLFDAIDVW (102 aa)) constitute an HD domain.

The protein belongs to the tRNA nucleotidyltransferase/poly(A) polymerase family. Bacterial CCA-adding enzyme type 1 subfamily. In terms of assembly, monomer. Can also form homodimers and oligomers. Mg(2+) serves as cofactor. It depends on Ni(2+) as a cofactor.

It carries out the reaction a tRNA precursor + 2 CTP + ATP = a tRNA with a 3' CCA end + 3 diphosphate. The catalysed reaction is a tRNA with a 3' CCA end + 2 CTP + ATP = a tRNA with a 3' CCACCA end + 3 diphosphate. In terms of biological role, catalyzes the addition and repair of the essential 3'-terminal CCA sequence in tRNAs without using a nucleic acid template. Adds these three nucleotides in the order of C, C, and A to the tRNA nucleotide-73, using CTP and ATP as substrates and producing inorganic pyrophosphate. tRNA 3'-terminal CCA addition is required both for tRNA processing and repair. Also involved in tRNA surveillance by mediating tandem CCA addition to generate a CCACCA at the 3' terminus of unstable tRNAs. While stable tRNAs receive only 3'-terminal CCA, unstable tRNAs are marked with CCACCA and rapidly degraded. The sequence is that of Multifunctional CCA protein from Pectobacterium atrosepticum (strain SCRI 1043 / ATCC BAA-672) (Erwinia carotovora subsp. atroseptica).